We begin with the raw amino-acid sequence, 262 residues long: Type III pantothenate kinase (262 aa).

7–14 is an ATP binding site; that stretch reads DIGNTRLK. Substrate is bound by residues Y96 and 103–106; that span reads GSDR. The active-site Proton acceptor is the D105. T137 is an ATP binding site. T187 serves as a coordination point for substrate.

It belongs to the type III pantothenate kinase family. Homodimer. NH4(+) is required as a cofactor. It depends on K(+) as a cofactor.

Its subcellular location is the cytoplasm. The catalysed reaction is (R)-pantothenate + ATP = (R)-4'-phosphopantothenate + ADP + H(+). It participates in cofactor biosynthesis; coenzyme A biosynthesis; CoA from (R)-pantothenate: step 1/5. Functionally, catalyzes the phosphorylation of pantothenate (Pan), the first step in CoA biosynthesis. In Leptothrix cholodnii (strain ATCC 51168 / LMG 8142 / SP-6) (Leptothrix discophora (strain SP-6)), this protein is Type III pantothenate kinase.